A 271-amino-acid polypeptide reads, in one-letter code: Probable diacyglycerol O-acyltransferase tgs3 (271 aa).

The protein belongs to the long-chain O-acyltransferase family.

The catalysed reaction is an acyl-CoA + a 1,2-diacyl-sn-glycerol = a triacyl-sn-glycerol + CoA. It participates in glycerolipid metabolism; triacylglycerol biosynthesis. Catalyzes the terminal and only committed step in triacylglycerol synthesis by using diacylglycerol and fatty acyl CoA as substrates. Required for storage lipid synthesis. The polypeptide is Probable diacyglycerol O-acyltransferase tgs3 (tgs3) (Mycobacterium tuberculosis (strain CDC 1551 / Oshkosh)).